A 313-amino-acid polypeptide reads, in one-letter code: Ribosomal RNA small subunit methyltransferase H (313 aa).

Residues 31 to 33, Asp51, Phe77, Asp95, and Gln102 contribute to the S-adenosyl-L-methionine site; that span reads GGH.

This sequence belongs to the methyltransferase superfamily. RsmH family.

Its subcellular location is the cytoplasm. It catalyses the reaction cytidine(1402) in 16S rRNA + S-adenosyl-L-methionine = N(4)-methylcytidine(1402) in 16S rRNA + S-adenosyl-L-homocysteine + H(+). Its function is as follows. Specifically methylates the N4 position of cytidine in position 1402 (C1402) of 16S rRNA. The protein is Ribosomal RNA small subunit methyltransferase H of Xylella fastidiosa (strain M12).